Reading from the N-terminus, the 208-residue chain is Protein-L-isoaspartate O-methyltransferase (208 aa).

Residue serine 59 is part of the active site.

It belongs to the methyltransferase superfamily. L-isoaspartyl/D-aspartyl protein methyltransferase family.

It is found in the cytoplasm. The enzyme catalyses [protein]-L-isoaspartate + S-adenosyl-L-methionine = [protein]-L-isoaspartate alpha-methyl ester + S-adenosyl-L-homocysteine. Catalyzes the methyl esterification of L-isoaspartyl residues in peptides and proteins that result from spontaneous decomposition of normal L-aspartyl and L-asparaginyl residues. It plays a role in the repair and/or degradation of damaged proteins. This is Protein-L-isoaspartate O-methyltransferase from Aliivibrio fischeri (strain ATCC 700601 / ES114) (Vibrio fischeri).